We begin with the raw amino-acid sequence, 116 residues long: MTDLEYQDLAESALTAIETACDRINDETDADIDNQRTGGMITLTFSNRSQIIINLQKPLQEIWMAAKAGGFHYKFRGNQWLDTKDSSEFFTGLSRYASEQAGQPLVFNAPVPVTGK.

Belongs to the frataxin family.

In terms of biological role, involved in iron-sulfur (Fe-S) cluster assembly. May act as a regulator of Fe-S biogenesis. This Polaromonas sp. (strain JS666 / ATCC BAA-500) protein is Iron-sulfur cluster assembly protein CyaY.